The sequence spans 117 residues: G antigen 4 (117 aa).

Residues 1 to 117 (MSWRGRSTYY…PEEGEKQSQC (117 aa)) form a disordered region. Acidic residues-rich tracts occupy residues 32 to 45 (FSDEVEPATPEEGE) and 87 to 96 (ECEDGPDGQE). Positions 103-117 (EEVKTPEEGEKQSQC) are enriched in basic and acidic residues.

Belongs to the GAGE family. In terms of tissue distribution, expressed in a variety of tumor tissues but not in normal tissues, except testis.

Antigen, recognized on melanoma by autologous cytolytic T-lymphocytes. This is G antigen 4 from Homo sapiens (Human).